The following is a 712-amino-acid chain: Transcriptional regulator GZF3 (712 aa).

Over residues 1-13 the composition is skewed to polar residues; it reads MSMSDIQQRPQIP. Disordered regions lie at residues 1-20, 27-135, 173-280, 377-533, and 596-712; these read MSMS…TAAV, NVNT…GPVC, SLKT…HHHL, DVSS…GNNF, and LNNN…KVKI. 2 stretches are compositionally biased toward low complexity: residues 27–84 and 107–131; these read NVNT…EQSS and PKTG…ISMS. The GATA-type zinc finger occupies 135 to 159; that stretch reads CGNCQTQTTPLWRRDETGQVLCNAC. The span at 186-199 shows a compositional bias: low complexity; that stretch reads KQNGSNSQSSKSSG. The span at 213–223 shows a compositional bias: basic residues; the sequence is GKKSPKSKKKS. The span at 246–261 shows a compositional bias: polar residues; the sequence is ATSNNTPTFKSTTSQS. Residues 268–280 are compositionally biased toward basic residues; that stretch reads NHHHQHHNHHHHL. A compositionally biased stretch (low complexity) spans 379-414; sequence SSINGSSTSLSSSSASSSIFSSVAPSTSSSSSLSNG. Composition is skewed to polar residues over residues 429–447 and 484–498; these read SKIS…TPLQ and QQSM…RSPI. Low complexity-rich tracts occupy residues 499 to 532 and 596 to 616; these read NGNQ…NGNN and LNNN…QPQQ. A coiled-coil region spans residues 545 to 598; sequence TRISELELVNDLYRTRIMELEAMEQAARLRENSMKKRLDEVMNLQINYQNLLNN. The span at 631–667 shows a compositional bias: polar residues; the sequence is DQGSQSISPNVSITGSTTITSPNSRSKIISETTPTHH.

It localises to the nucleus. Functionally, probable transcription factor involved in response to fluconazole, LiCl, and copper. The chain is Transcriptional regulator GZF3 (GZF3) from Candida albicans (strain SC5314 / ATCC MYA-2876) (Yeast).